We begin with the raw amino-acid sequence, 853 residues long: Dynein axonemal assembly factor 5 (853 aa).

Ala-2 carries the post-translational modification N-acetylalanine. 9 HEAT repeats span residues 69 to 107, 200 to 238, 240 to 276, 278 to 316, 374 to 412, 597 to 636, 694 to 732, 736 to 774, and 782 to 820; these read GPWARLLLPRLLRLLSDPAEGCRALAAHLLDLGLRRAAR, HMQSESLIGPLMQTISHQHWKVRVAVIEATGTVIQFGSG, SVDDVLSHFAQRLFDDVPQVRQAVTSVVGGWLLNLRD, YSFLHKLTPLLLSSFSDEMPEIRQTATSLWEKVGLQWQQ, RVKAAQLLPVLLLHAEDHITQHLEIVLRTLHQACTDEEK, GEALQHVIPTLRACLQPSTDPHMRLKLFSILSMMLLRPKD, QEAQETLMPQVLATLEDDSQTTRLMSCRIINMFLKNSGD, PEKFLKVYPELLKRLDDVSNDVRMAAASALLTWLKCIES, and QSSVQFLYRELLVHLDDPESAIQDTVLEVLKEGSVLFPD.

It belongs to the DNAAF5 family. As to quaternary structure, interacts with DNAI2; probably involved in outer arm dynein assembly. In terms of tissue distribution, expressed in ciliated cells including ependymal cells lining the lateral ventricles and multiciliated epithelium of oviduct ampulla.

The protein resides in the cytoplasm. Its subcellular location is the cytoplasmic granule. Its function is as follows. Cytoplasmic protein involved in the delivery of the dynein machinery to the motile cilium. It is required for the assembly of the axonemal dynein inner and outer arms, two structures attached to the peripheral outer doublet A microtubule of the axoneme, that play a crucial role in cilium motility. The protein is Dynein axonemal assembly factor 5 of Mus musculus (Mouse).